Consider the following 73-residue polypeptide: RNA-binding protein Hfq (73 aa).

In terms of domain architecture, Sm spans 8–68 (DQFLNQIRKD…ISTFAPQKNV (61 aa)).

This sequence belongs to the Hfq family. In terms of assembly, homohexamer.

Its function is as follows. RNA chaperone that binds small regulatory RNA (sRNAs) and mRNAs to facilitate mRNA translational regulation in response to envelope stress, environmental stress and changes in metabolite concentrations. Also binds with high specificity to tRNAs. In Bacillus pumilus (strain SAFR-032), this protein is RNA-binding protein Hfq.